The sequence spans 554 residues: Glucose-6-phosphate isomerase (554 aa).

Glutamate 359 serves as the catalytic Proton donor. Residues histidine 390 and lysine 518 contribute to the active site.

The protein belongs to the GPI family.

Its subcellular location is the cytoplasm. It catalyses the reaction alpha-D-glucose 6-phosphate = beta-D-fructose 6-phosphate. It participates in carbohydrate biosynthesis; gluconeogenesis. It functions in the pathway carbohydrate degradation; glycolysis; D-glyceraldehyde 3-phosphate and glycerone phosphate from D-glucose: step 2/4. In terms of biological role, catalyzes the reversible isomerization of glucose-6-phosphate to fructose-6-phosphate. This Pseudomonas syringae pv. tomato (strain ATCC BAA-871 / DC3000) protein is Glucose-6-phosphate isomerase.